The chain runs to 367 residues: uncharacterized protein (367 aa).

Helical transmembrane passes span isoleucine 18–glycine 38, valine 239–glycine 259, isoleucine 296–isoleucine 316, and alanine 329–leucine 349.

This sequence belongs to the ABC-4 integral membrane protein family.

It is found in the cell membrane. This is an uncharacterized protein from Methanocaldococcus jannaschii (strain ATCC 43067 / DSM 2661 / JAL-1 / JCM 10045 / NBRC 100440) (Methanococcus jannaschii).